A 540-amino-acid chain; its full sequence is CUB domain-containing protein 2 (540 aa).

The first 22 residues, 1 to 22 (MLAEWGACLLLAVALLGPGLQA), serve as a signal peptide directing secretion. The Extracellular portion of the chain corresponds to 23 to 516 (QAMEGVKCGG…VSMVAQDTSD (494 aa)). Disulfide bonds link Cys-30-Cys-56, Cys-83-Cys-106, Cys-145-Cys-171, Cys-198-Cys-218, Cys-257-Cys-283, and Cys-314-Cys-336. CUB domains are found at residues 30–143 (CGGV…YQKD), 145–255 (CGGV…YFSG), and 257–373 (CQEV…YIGV). A glycan (N-linked (GlcNAc...) asparagine) is linked at Asn-40. An N-linked (GlcNAc...) asparagine glycan is attached at Asn-267. Asn-377, Asn-435, and Asn-436 each carry an N-linked (GlcNAc...) asparagine glycan. A helical membrane pass occupies residues 517–537 (IVFLGLCILAGILMVIAIVVL). The Cytoplasmic portion of the chain corresponds to 538 to 540 (MLL).

It is found in the membrane. This chain is CUB domain-containing protein 2 (CDCP2), found in Homo sapiens (Human).